Here is a 209-residue protein sequence, read N- to C-terminus: MKKQKTTTQKPKLSYRINEQIRVPEVRIIFPDGTQQVMKTIDAKRLAEEKNFDLIEVQPNADPPVCKLDNLGKLIYKMDKRDKDLKKKQKTTTLKELRFHPNTDKHDFDFKTAHLEEFLRKGNRVRATIVFLGRSIIYKDRGLELAERLTERLSCVSNRDGDPKFEGKKLFVYFEPDKKKVDAFERIKAKTGVPQQPLAPLPPSEDIEE.

It belongs to the IF-3 family. As to quaternary structure, monomer.

It is found in the cytoplasm. Its function is as follows. IF-3 binds to the 30S ribosomal subunit and shifts the equilibrium between 70S ribosomes and their 50S and 30S subunits in favor of the free subunits, thus enhancing the availability of 30S subunits on which protein synthesis initiation begins. This Chlorobium phaeobacteroides (strain DSM 266 / SMG 266 / 2430) protein is Translation initiation factor IF-3.